Consider the following 569-residue polypeptide: CTP synthase (569 aa).

The interval 1–276 (MNQATPTKHV…DAYLVRRLDL (276 aa)) is amidoligase domain. S18 is a binding site for CTP. S18 contributes to the UTP binding site. ATP contacts are provided by residues 19 to 24 (SLGKGL) and D76. Positions 76 and 150 each coordinate Mg(2+). Residues 157–159 (DIE), 197–202 (KTKPTQ), and K233 each bind CTP. UTP is bound by residues 197–202 (KTKPTQ) and K233. A Glutamine amidotransferase type-1 domain is found at 301-550 (TVALVGKYVD…VGAAIERQRE (250 aa)). G364 contacts L-glutamine. C391 (nucleophile; for glutamine hydrolysis) is an active-site residue. L-glutamine is bound by residues 392–395 (LGLQ), E415, and R476. Active-site residues include H523 and E525.

This sequence belongs to the CTP synthase family. In terms of assembly, homotetramer.

It carries out the reaction UTP + L-glutamine + ATP + H2O = CTP + L-glutamate + ADP + phosphate + 2 H(+). The enzyme catalyses L-glutamine + H2O = L-glutamate + NH4(+). It catalyses the reaction UTP + NH4(+) + ATP = CTP + ADP + phosphate + 2 H(+). The protein operates within pyrimidine metabolism; CTP biosynthesis via de novo pathway; CTP from UDP: step 2/2. With respect to regulation, allosterically activated by GTP, when glutamine is the substrate; GTP has no effect on the reaction when ammonia is the substrate. The allosteric effector GTP functions by stabilizing the protein conformation that binds the tetrahedral intermediate(s) formed during glutamine hydrolysis. Inhibited by the product CTP, via allosteric rather than competitive inhibition. Its function is as follows. Catalyzes the ATP-dependent amination of UTP to CTP with either L-glutamine or ammonia as the source of nitrogen. Regulates intracellular CTP levels through interactions with the four ribonucleotide triphosphates. In Nocardioides sp. (strain ATCC BAA-499 / JS614), this protein is CTP synthase.